Consider the following 378-residue polypeptide: Putative F-box protein At4g17565 (378 aa).

The region spanning 16–63 (PKWSELCPDLLRSIFEQLSFTNLNRAKLVCRSWNSASRGCVPKRNQIP) is the F-box domain.

The polypeptide is Putative F-box protein At4g17565 (Arabidopsis thaliana (Mouse-ear cress)).